A 414-amino-acid chain; its full sequence is Esterase FrsA (414 aa).

The protein belongs to the FrsA family.

It catalyses the reaction a carboxylic ester + H2O = an alcohol + a carboxylate + H(+). Functionally, catalyzes the hydrolysis of esters. The chain is Esterase FrsA from Salmonella agona (strain SL483).